A 121-amino-acid polypeptide reads, in one-letter code: Protein SNORC (121 aa).

The N-terminal stretch at 1-24 (MASCLALRMALLLVSGVLAPAVLT) is a signal peptide. Residues 25–92 (DDVPQEPVPT…QGGGSLGPGA (68 aa)) lie on the Extracellular side of the membrane. Residues 28 to 84 (PQEPVPTLWNEPAELPSGEGPVESTSPGREPVDTGPPAPTVAPGPEDSTAQERLDQG) form a disordered region. The chain crosses the membrane as a helical span at residues 93 to 113 (IAAIVIAALLATCVVLALVVV). The Cytoplasmic portion of the chain corresponds to 114 to 121 (ALRKFSAS).

In terms of assembly, interacts (via the extracellular domain) with FGF2. In terms of tissue distribution, expressed in cartilage.

Its subcellular location is the membrane. It is found in the cytoplasm. The protein resides in the secreted. It localises to the extracellular space. The protein localises to the extracellular matrix. Functionally, plays a role in the regulation of chondrocyte maturation and postnatal endochondral ossification. May inhibit cell growth stimulation induced by FGF2. The chain is Protein SNORC from Homo sapiens (Human).